Consider the following 274-residue polypeptide: Diaminopimelate epimerase (274 aa).

The substrate site is built by Asn-11 and Asn-65. The active-site Proton donor is the Cys-74. Substrate-binding positions include Gly-75–Asn-76, Asn-158, Asn-191, and Glu-209–Arg-210. Residue Cys-218 is the Proton acceptor of the active site. Substrate is bound at residue Gly-219–Thr-220.

The protein belongs to the diaminopimelate epimerase family. In terms of assembly, homodimer.

It is found in the cytoplasm. The catalysed reaction is (2S,6S)-2,6-diaminopimelate = meso-2,6-diaminopimelate. Its pathway is amino-acid biosynthesis; L-lysine biosynthesis via DAP pathway; DL-2,6-diaminopimelate from LL-2,6-diaminopimelate: step 1/1. Catalyzes the stereoinversion of LL-2,6-diaminopimelate (L,L-DAP) to meso-diaminopimelate (meso-DAP), a precursor of L-lysine and an essential component of the bacterial peptidoglycan. The chain is Diaminopimelate epimerase from Carboxydothermus hydrogenoformans (strain ATCC BAA-161 / DSM 6008 / Z-2901).